The primary structure comprises 159 residues: U-actitoxin-Avd13a/b (159 aa).

Residues 1–18 (MKSIFLVFFAVCLVKAEA) form the signal peptide. Residues 19-26 (GKGRKREP) constitute a propeptide that is removed on maturation. Disulfide bonds link Cys33/Cys45 and Cys36/Cys52. A propeptide spanning residues 59–60 (EP) is cleaved from the precursor. 2 disulfide bridges follow: Cys67-Cys79 and Cys70-Cys86. A propeptide spanning residues 93 to 94 (EP) is cleaved from the precursor. Intrachain disulfides connect Cys101–Cys113 and Cys104–Cys120. A propeptide spanning residues 127 to 128 (EP) is cleaved from the precursor. Disulfide bonds link Cys135-Cys147 and Cys138-Cys154.

It belongs to the sea anemone BBH family.

It localises to the secreted. The protein localises to the nematocyst. Inhibits ion channels. The sequence is that of U-actitoxin-Avd13a/b from Anemonia viridis (Snakelocks anemone).